We begin with the raw amino-acid sequence, 249 residues long: Triosephosphate isomerase (249 aa).

2 residues coordinate substrate: Asn12 and Lys14. The residue at position 14 (Lys14) is an N6-acetyllysine. Tyr68 bears the 3'-nitrotyrosine mark. Phosphoserine is present on Ser80. The active-site Electrophile is the His96. A Phosphoserine modification is found at Ser106. Lys142 is covalently cross-linked (Glycyl lysine isopeptide (Lys-Gly) (interchain with G-Cter in SUMO1)). N6-succinyllysine is present on Lys149. The residue at position 156 (Lys156) is an N6-acetyllysine; alternate. Lys156 carries the N6-succinyllysine; alternate modification. A Phosphoserine modification is found at Ser159. The Proton acceptor role is filled by Glu166. Position 173 is a phosphothreonine (Thr173). Lys194 carries the post-translational modification N6-acetyllysine; alternate. Residue Lys194 is modified to N6-succinyllysine; alternate. At Lys194 the chain carries N6-methyllysine; alternate. Ser198 carries the phosphoserine modification. Tyr209 carries the post-translational modification 3'-nitrotyrosine. Ser212 carries the phosphoserine modification. Thr214 bears the Phosphothreonine mark. At Ser223 the chain carries Phosphoserine. Lys238 carries the post-translational modification N6-acetyllysine.

The protein belongs to the triosephosphate isomerase family. As to quaternary structure, homodimer.

The protein localises to the cytoplasm. It catalyses the reaction dihydroxyacetone phosphate = methylglyoxal + phosphate. The enzyme catalyses D-glyceraldehyde 3-phosphate = dihydroxyacetone phosphate. It participates in carbohydrate degradation; glycolysis; D-glyceraldehyde 3-phosphate from glycerone phosphate: step 1/1. It functions in the pathway carbohydrate biosynthesis; gluconeogenesis. Triosephosphate isomerase is an extremely efficient metabolic enzyme that catalyzes the interconversion between dihydroxyacetone phosphate (DHAP) and D-glyceraldehyde-3-phosphate (G3P) in glycolysis and gluconeogenesis. Functionally, it is also responsible for the non-negligible production of methylglyoxal a reactive cytotoxic side-product that modifies and can alter proteins, DNA and lipids. The sequence is that of Triosephosphate isomerase (TPI1) from Gorilla gorilla gorilla (Western lowland gorilla).